A 782-amino-acid polypeptide reads, in one-letter code: uncharacterized protein (782 aa).

3 disordered regions span residues 1–127, 205–234, and 308–355; these read MTTT…SAMK, NAAA…SYNP, and PYNF…SYLR. Positions 24–54 are enriched in basic and acidic residues; sequence KPQEEPTMKDKALLFEKQRQEKKMKHTEAKM. The span at 82–118 shows a compositional bias: low complexity; sequence KNVNNATSTNNATSTKNNTKNTPKNTPKNIPKNTTAK. The segment covering 312 to 324 has biased composition (polar residues); it reads ARNNHGSDVSSAM. Residues 326 to 336 show a composition bias toward basic and acidic residues; it reads NARRQASETRR. Residues 337–346 show a composition bias toward polar residues; the sequence is SNLSSYNDRN. Positions 361–628 form a coiled coil; it reads MEKIRTEVDK…ERLRERLREL (268 aa). Over residues 629 to 668 the composition is skewed to basic and acidic residues; sequence GSRDRSYNRSSRDRSHDRLYERSPRSRDRSSRDRSRDRYS. The interval 629–689 is disordered; it reads GSRDRSYNRS…SDSVKDYSVG (61 aa). Residues 669–678 show a composition bias toward basic residues; sequence RSRSRSRYRR. Residues 679–689 show a composition bias toward basic and acidic residues; it reads RSDSVKDYSVG.

This is an uncharacterized protein from Yarrowia lipolytica (strain CLIB 122 / E 150) (Yeast).